The primary structure comprises 327 residues: Probable cell division protein WhiA (327 aa).

The segment at residues 275-308 (SLEELGRLADPQMTKDAVAGRIRRLLTMADKRAE) is a DNA-binding region (H-T-H motif).

Belongs to the WhiA family.

Involved in cell division and chromosome segregation. This is Probable cell division protein WhiA from Corynebacterium glutamicum (strain R).